We begin with the raw amino-acid sequence, 679 residues long: Glycine--tRNA ligase beta subunit (679 aa).

The protein belongs to the class-II aminoacyl-tRNA synthetase family. Tetramer of two alpha and two beta subunits.

Its subcellular location is the cytoplasm. It carries out the reaction tRNA(Gly) + glycine + ATP = glycyl-tRNA(Gly) + AMP + diphosphate. In Streptococcus mutans serotype c (strain ATCC 700610 / UA159), this protein is Glycine--tRNA ligase beta subunit.